The following is a 495-amino-acid chain: Putative FAD-containing monooxygenase MymA (495 aa).

FAD-binding positions include Ser-15, Glu-36, Trp-45, 56–57 (DS), and Val-104.

Belongs to the FAD-binding monooxygenase family. The cofactor is FAD.

Functionally, required for maintaining the appropriate mycolic acid composition and permeability of the envelope on its exposure to acidic pH. This Mycobacterium tuberculosis (strain CDC 1551 / Oshkosh) protein is Putative FAD-containing monooxygenase MymA (mymA).